An 824-amino-acid chain; its full sequence is Lon protease (824 aa).

Positions 1–23 are disordered; it reads MNEPMSLFDDLPEEHDEPQEAPE. The segment covering 10 to 20 has biased composition (acidic residues); it reads DLPEEHDEPQE. Residues 26–222 enclose the Lon N-terminal domain; it reads LPMVVLGEMV…KVYLVLARQL (197 aa). 375–382 is an ATP binding site; that stretch reads GPPGVGKT. A Lon proteolytic domain is found at 617–798; that stretch reads QDEVGVATGV…DEVLRIALSR (182 aa). Active-site residues include S704 and K747. A disordered region spans residues 800-824; it reads PTPANNQNGSHTNNRGQPSPAPAGT. The segment covering 802 to 816 has biased composition (polar residues); the sequence is PANNQNGSHTNNRGQ.

It belongs to the peptidase S16 family. As to quaternary structure, homohexamer. Organized in a ring with a central cavity.

It is found in the cytoplasm. The catalysed reaction is Hydrolysis of proteins in presence of ATP.. In terms of biological role, ATP-dependent serine protease that mediates the selective degradation of mutant and abnormal proteins as well as certain short-lived regulatory proteins. Required for cellular homeostasis and for survival from DNA damage and developmental changes induced by stress. Degrades polypeptides processively to yield small peptide fragments that are 5 to 10 amino acids long. Binds to DNA in a double-stranded, site-specific manner. The sequence is that of Lon protease from Chloroflexus aggregans (strain MD-66 / DSM 9485).